Here is a 290-residue protein sequence, read N- to C-terminus: 4-diphosphocytidyl-2-C-methyl-D-erythritol kinase (290 aa).

Lysine 12 is an active-site residue. Proline 97–alanine 107 contacts ATP. Residue aspartate 139 is part of the active site.

This sequence belongs to the GHMP kinase family. IspE subfamily.

The enzyme catalyses 4-CDP-2-C-methyl-D-erythritol + ATP = 4-CDP-2-C-methyl-D-erythritol 2-phosphate + ADP + H(+). It functions in the pathway isoprenoid biosynthesis; isopentenyl diphosphate biosynthesis via DXP pathway; isopentenyl diphosphate from 1-deoxy-D-xylulose 5-phosphate: step 3/6. Its function is as follows. Catalyzes the phosphorylation of the position 2 hydroxy group of 4-diphosphocytidyl-2C-methyl-D-erythritol. This is 4-diphosphocytidyl-2-C-methyl-D-erythritol kinase from Parvibaculum lavamentivorans (strain DS-1 / DSM 13023 / NCIMB 13966).